Here is a 117-residue protein sequence, read N- to C-terminus: MDLIKIAEEAFATGKQHPSFKAGDTVTVAYRIIEGNKERVQLYRGVVIKIAGHGEKKRFTVRKMSGTVGVERIFPIESPAIDSIEVNKVGKVRRAKLYYLRALTGKKARIKEKRVNG.

This sequence belongs to the bacterial ribosomal protein bL19 family.

Functionally, this protein is located at the 30S-50S ribosomal subunit interface and may play a role in the structure and function of the aminoacyl-tRNA binding site. This is Large ribosomal subunit protein bL19 from Bacteroides fragilis (strain ATCC 25285 / DSM 2151 / CCUG 4856 / JCM 11019 / LMG 10263 / NCTC 9343 / Onslow / VPI 2553 / EN-2).